We begin with the raw amino-acid sequence, 615 residues long: Ankyrin repeat and LEM domain-containing protein 1 (615 aa).

ANK repeat units lie at residues 39-71 (DGAA…DPNA), 75-104 (EALT…DPAL), and 108-137 (DGLR…RTRT). Positions 138–210 (RTRIGAETQE…DKHGSSASPP (73 aa)) are disordered. The short motif at 271 to 280 (LNARLQALTL) is the Nuclear export signal element. The segment covering 283–294 (PNAAGFQSSPSS) has biased composition (polar residues). A disordered region spans residues 283–315 (PNAAGFQSSPSSMPLLDRSPAHSPPRTPTPGAS). Positions 355 to 399 (HLPVSTVSDLELLKGLRALGENPHPITPFTRQLYHQQLEEAQIAP) constitute an LEM domain. One can recognise a GIY-YIG domain in the interval 448–566 (KSSFTYLLLD…ALGIQTLTNQ (119 aa)). The Nuclear localization signal motif lies at 579–586 (PPARRRRL).

As to quaternary structure, interacts (via LEM domain) with BANF1; the interaction may favor BANF1 dimerization. In terms of tissue distribution, expression is predominant in adult bone marrow.

It is found in the cytoplasm. Its subcellular location is the nucleus. Endonuclease that probably plays a role in the DNA damage response and DNA repair. This is Ankyrin repeat and LEM domain-containing protein 1 (ANKLE1) from Homo sapiens (Human).